The primary structure comprises 258 residues: Lysine-rich coiled-coil protein 1 (258 aa).

The disordered stretch occupies residues 142–258 (DNSTSTHQAS…MLWDQSILGF (117 aa)). Residues 150–161 (ASHKQIHQKRKR) are compositionally biased toward basic residues. 3 stretches are compositionally biased toward basic and acidic residues: residues 162-175 (HPEEGREKSEEEWS), 183-213 (CKEIDLDKHKSIQRKKTEVEIETVHVSTEKL), and 220-232 (KGRDVVSKKEERK). Residues 211-248 (EKLKNRKEKKGRDVVSKKEERKRTKKKKEQGQERTEEE) are a coiled coil.

In Pongo abelii (Sumatran orangutan), this protein is Lysine-rich coiled-coil protein 1 (KRCC1).